A 558-amino-acid polypeptide reads, in one-letter code: Factor VII-activating protease (558 aa).

Residues 1–23 (MFVRMLVFRVLLLIALVGKSVIG) form the signal peptide. 3 consecutive EGF-like domains span residues 71-107 (DDDP…SRCQ), 109-146 (AQNK…PDCS), and 148-186 (VLPA…KFCE). 18 disulfides stabilise this stretch: cysteine 75–cysteine 86, cysteine 80–cysteine 95, cysteine 97–cysteine 106, cysteine 113–cysteine 123, cysteine 118–cysteine 134, cysteine 136–cysteine 145, cysteine 152–cysteine 163, cysteine 157–cysteine 174, cysteine 176–cysteine 185, cysteine 192–cysteine 274, cysteine 213–cysteine 255, cysteine 244–cysteine 269, cysteine 299–cysteine 433, cysteine 345–cysteine 361, cysteine 353–cysteine 422, cysteine 445–cysteine 513, cysteine 475–cysteine 491, and cysteine 503–cysteine 531. Residues 191-274 (DCYVGDGYSY…KWEYCDVTVC (84 aa)) form the Kringle domain. Residues 312 to 553 (IYGGFKSTAG…FLNWIKTTMH (242 aa)) enclose the Peptidase S1 domain. Catalysis depends on charge relay system residues histidine 360 and aspartate 409. Serine 507 serves as the catalytic Charge relay system.

This sequence belongs to the peptidase S1 family. In terms of assembly, heterodimer; disulfide-linked. Heterodimer of a 50 kDa heavy and a 27 kDa light chain linked by a disulfide bond. Post-translationally, proteolytic cleavage at Gly-23 or Met-27 can give rise to the 50 kDa heavy chain (HC) and cleavage at Arg-311 or Lys-317 can give rise to the 27 kDa light chain (LC). The HC can undergo further proteolytic cleavage giving rise to a 26 kDa fragment. The LC can undergo further proteolytic cleavage at Arg-311 leading to a 17-kDa fragment and at Arg-478 leading to a 8-kDa fragment. Liver and kidney.

The protein resides in the secreted. Functionally, cleaves the alpha-chain at multiple sites and the beta-chain between 'Lys-53' and 'Lys-54' but not the gamma-chain of fibrinogen and therefore does not initiate the formation of the fibrin clot and does not cause the fibrinolysis directly. It does not cleave (activate) prothrombin and plasminogen but converts the inactive single chain urinary plasminogen activator (pro-urokinase) to the active two chain form. Activates coagulation factor VII. May function as a tumor suppressor negatively regulating cell proliferation and cell migration. This is Factor VII-activating protease from Mus musculus (Mouse).